The chain runs to 553 residues: MGWLTKILKGSSHKFSDGQCNGRYREDRNLEGPRYSAEGSDFDKEEIECAIALSLSEQEHVIPQDDKGKKIIEYKSETEEDDDDDEDEDEEYMRAQLEAAEEEERRVAQAQIEEEEKRRAEAQLEETEKLLAKARLEEEEMRRSKAQLEEDELLAKALQESMNVGSPPRYDPGNILQPYPFLIPSSHRICVGCQAEIGHGRFLSCMGGVWHPECFCCNACDKPIIDYEFSMSGNRPYHKLCYKEQHHPKCDVCHNFIPTNPAGLIEYRAHPFWMQKYCPSHERDGTPRCCSCERMEPKDTKYLILDDGRKLCLECLDSAIMDTHECQPLYLEIREFYEGLHMKVEQQIPMLLVERSALNEAMEGEKHGHHHLPETRGLCLSEEQTVTTVLRRPRIGAGYKLIDMITEPCRLIRRCEVTAILILYGLPRLLTGSILAHEMMHAWLRLNGYPNLRPEVEEGICQVLAHMWLESETYAGSTLVDIASSSSSAVVSASSKKGERSDFEKKLGEFFKHQIESDSSSAYGDGFRQGNQAVLKHGLRRTLDHIRLTGTFP.

The disordered stretch occupies residues 10–41 (GSSHKFSDGQCNGRYREDRNLEGPRYSAEGSD). The UIM 1 domain occupies 42–61 (FDKEEIECAIALSLSEQEHV). Residues 62–77 (IPQDDKGKKIIEYKSE) are compositionally biased toward basic and acidic residues. The disordered stretch occupies residues 62 to 91 (IPQDDKGKKIIEYKSETEEDDDDDEDEDEE). Residues 78–91 (TEEDDDDDEDEDEE) show a composition bias toward acidic residues. Residues 87-106 (DEDEEYMRAQLEAAEEEERR) enclose the UIM 2 domain. The 20-residue stretch at 122 to 141 (AQLEETEKLLAKARLEEEEM) folds into the UIM 3; degenerate domain. Positions 149 to 168 (EEDELLAKALQESMNVGSPP) constitute a UIM 4 domain. The residue at position 166 (Ser-166) is a Phosphoserine. One can recognise an LIM zinc-binding domain in the interval 188-248 (RICVGCQAEI…KLCYKEQHHP (61 aa)).

As to quaternary structure, interacts with ubiquitin, TCP14 and TCP15. In terms of processing, polyubiquitinated by DA2.

Acts redundantly with DA1 and DAR2 to regulate endoreduplication during leaf development. Together with DA1 and DAR2, modulates the protein stability of the transcription factors TCP14 and TCP15, which repress endoreduplication by directly regulating the expression of cell-cycle genes. This Arabidopsis thaliana (Mouse-ear cress) protein is Protein DA1-related 1.